The sequence spans 269 residues: uncharacterized protein (269 aa).

This is an uncharacterized protein from Schizosaccharomyces pombe (strain 972 / ATCC 24843) (Fission yeast).